The chain runs to 2130 residues: Dedicator of cytokinesis protein 7 (2130 aa).

The residue at position 30 (Ser30) is a Phosphoserine. The segment at Gly137–Asp175 is disordered. A phosphoserine mark is found at Ser180 and Ser182. Residues Phe365 to Arg395 are a coiled coil. Position 381 is an N6-methyllysine (Lys381). Thr450 carries the post-translational modification Phosphothreonine. A Phosphoserine modification is found at Ser452. The 167-residue stretch at Arg561–Val727 folds into the C2 DOCK-type domain. Residues Ser862, Ser864, Ser882, Ser888, Ser896, Ser900, and Ser905 each carry the phosphoserine modification. The segment covering Ser888–Asn901 has biased composition (low complexity). Residues Ser888–Glu966 are disordered. Phosphothreonine occurs at positions 907 and 909. A phosphoserine mark is found at Ser910, Ser929, Ser963, Ser1382, Ser1420, Ser1422, Ser1424, and Ser1428. The segment covering Ser942–Glu966 has biased composition (polar residues). A DOCKER domain is found at Lys1668–Pro2104. Lys1952 carries the N6-acetyllysine modification. Residues Asp2076–Lys2102 adopt a coiled-coil conformation. Ser2119 bears the Phosphoserine mark.

This sequence belongs to the DOCK family. As to quaternary structure, component of the DOCK7-induced septin displacement/DISP complex, at least composed of DOCK7, LRCH3 and MYO6. Interacts with TSC1. Interacts with nucleotide-free RAC1 and RAC3. Interacts with TACC3. Interacts with CRY1. Interacts with NOD2.

It localises to the cell projection. The protein localises to the axon. Its function is as follows. Functions as a guanine nucleotide exchange factor (GEF), which activates Rac1 and Rac3 Rho small GTPases by exchanging bound GDP for free GTP. Does not have a GEF activity for CDC42. Required for STMN1 'Ser-15' phosphorylation during axon formation and consequently for neuronal polarization. As part of the DISP complex, may regulate the association of septins with actin and thereby regulate the actin cytoskeleton. Has a role in pigmentation. Involved in the regulation of cortical neurogenesis through the control of radial glial cells (RGCs) proliferation versus differentiation; negatively regulates the basal-to-apical interkinetic nuclear migration of RGCs by antagonizing the microtubule growth-promoting function of TACC3. This Mus musculus (Mouse) protein is Dedicator of cytokinesis protein 7 (Dock7).